We begin with the raw amino-acid sequence, 142 residues long: MVLSADDKTNIKNCWGKIGGHGGEYGEEALQRMFAAFPTTKTYFSHIDVSPGSAQVKAHGKKVADALAKAADHVEDLPGALSTLSDLHAHKLRVDPVNFKFLSHCLLVTLACHHPGDFTPAMHASLDKFLASVSTVLTSKYR.

The Globin domain maps to 2-142; sequence VLSADDKTNI…VSTVLTSKYR (141 aa). Position 4 is a phosphoserine (serine 4). An N6-succinyllysine modification is found at lysine 8. Threonine 9 carries the post-translational modification Phosphothreonine. Lysine 12 is modified (N6-succinyllysine). Lysine 17 carries the post-translational modification N6-acetyllysine; alternate. Lysine 17 is subject to N6-succinyllysine; alternate. Residue tyrosine 25 is modified to Phosphotyrosine. Position 41 is an N6-succinyllysine (lysine 41). Serine 50 carries the post-translational modification Phosphoserine. Residue histidine 59 coordinates O2. Histidine 88 lines the heme b pocket. Residue serine 103 is modified to Phosphoserine. Threonine 109 bears the Phosphothreonine mark. Residues serine 125 and serine 132 each carry the phosphoserine modification. Residues threonine 135 and threonine 138 each carry the phosphothreonine modification. Serine 139 carries the post-translational modification Phosphoserine.

It belongs to the globin family. As to quaternary structure, heterotetramer of two alpha chains and two beta chains. Red blood cells.

Its function is as follows. Involved in oxygen transport from the lung to the various peripheral tissues. In terms of biological role, hemopressin acts as an antagonist peptide of the cannabinoid receptor CNR1. Hemopressin-binding efficiently blocks cannabinoid receptor CNR1 and subsequent signaling. This Rattus norvegicus (Rat) protein is Hemoglobin subunit alpha-1/2 (Hba1).